The chain runs to 548 residues: uncharacterized protein (548 aa).

The region spanning 8–200 is the DhaL domain; the sequence is KLFADMIIQG…LLCVYEGFLK (193 aa).

This is an uncharacterized protein from Staphylococcus aureus (strain MRSA252).